A 196-amino-acid chain; its full sequence is MINIHKRNIVLLVGPSGVGKGTIEKILFESKTLKLSLSRSATTRKKREGEINGIHYFFISKEEFESKIENDEFMEWNEHFDNYYGTLLSEILLIFSQGRIPVLEVETYGAKKILQKYKDKKDFNWITIFVDPPSFEELENRIIKRGTDTKEKIAIRMAKAKEELKDRDLFEFKITNHTPEQAAEEIEKIILKKTMG.

In terms of domain architecture, Guanylate kinase-like spans 7–191 (RNIVLLVGPS…AAEEIEKIIL (185 aa)). 14 to 21 (GPSGVGKG) is an ATP binding site.

The protein belongs to the guanylate kinase family.

It is found in the cytoplasm. It catalyses the reaction GMP + ATP = GDP + ADP. In terms of biological role, essential for recycling GMP and indirectly, cGMP. The sequence is that of Guanylate kinase from Mycoplasmopsis pulmonis (strain UAB CTIP) (Mycoplasma pulmonis).